Reading from the N-terminus, the 2050-residue chain is Unconventional myosin-XVIIIa (2050 aa).

Composition is skewed to basic and acidic residues over residues 1–17 and 23–34; these read MFNLMKKDKDKDGGRKE and EKKERMSAAELR. The interval 1–34 is disordered; sequence MFNLMKKDKDKDGGRKEKKEKKEKKERMSAAELR. The segment at 1–398 is mediates nucleotide-independent binding to F-actin and interaction with GOLPH3; the sequence is MFNLMKKDKD…LDVDEDDIEK (398 aa). Serine 35, serine 52, serine 72, and serine 74 each carry phosphoserine. Threonine 79 is subject to Phosphothreonine. Phosphoserine is present on residues serine 83 and serine 98. Threonine 99 is modified (phosphothreonine). Phosphoserine is present on residues serine 102 and serine 103. Positions 114–118 match the Interaction with actin motif; it reads RGSVL. Phosphoserine occurs at positions 140, 145, 157, 160, 164, 234, and 340. Residues 140 to 167 form a disordered region; it reads SFSQRSRDESASETSTPSEHSAAPSPQV. Residues 220-311 form the PDZ domain; the sequence is ELELQRRPTG…SVRLKVQPIP (92 aa). The Myosin N-terminal SH3-like domain occupies 349 to 401; it reads TEKVWLVHRDGFSLASQLKSEELSLPEGKARVKLDHDGAILDVDEDDIEKANA. The Myosin motor domain occupies 405 to 1181; it reads DRLEDLASLV…TLARLEEQRD (777 aa). 498–505 is a binding site for ATP; it reads GSSGSGKT. Phosphoserine occurs at positions 983, 1063, 1064, and 1066. Positions 1051–1071 are disordered; sequence PGEPRSASSRRVSSSSELDLP. Residues 1055–1066 are compositionally biased toward low complexity; sequence RSASSRRVSSSS. One can recognise an IQ domain in the interval 1184–1213; that stretch reads TSRHLTLFQAACRGYLARQHFKKRKIQDLA. Residues 1242-1967 adopt a coiled-coil conformation; that stretch reads LIQVQLSEEQ…KKNKLEGDSD (726 aa). The tract at residues 1448-1477 is disordered; that stretch reads RNHELEKKQRRFDSELSQAHEETQREKLQR. Serine 1636 carries the post-translational modification Phosphoserine. The tract at residues 1848 to 1897 is disordered; sequence MEKLTEERDQRAAAENREKEQNKRLQRQLRDTKEEMSELARKEAEASRKK. Phosphoserine is present on residues serine 1938, serine 1966, serine 1970, serine 1994, serine 1998, serine 2002, serine 2003, serine 2016, serine 2032, serine 2037, and serine 2039. The disordered stretch occupies residues 1955-2050; the sequence is YQKKKNKLEG…TEAKLTETSA (96 aa). At threonine 2041 the chain carries Phosphothreonine. The span at 2041–2050 shows a compositional bias: basic and acidic residues; that stretch reads TEAKLTETSA.

Belongs to the TRAFAC class myosin-kinesin ATPase superfamily. Myosin family. Homodimer. Forms a tripartite complex with CDC42BPA/CDC42BPB and LURAP1 with the latter acting as an adapter connecting CDC42BPA/CDC42BPB and MYO18A. Binds F-actin; regulated by ADP and GOLPH3. Interacts with GOLPH3; the interaction is direct and may link Golgi membranes to the actin cytoskeleton. Interacts with JAK3. Interacts with MSR1 and CD14. In terms of processing, phosphorylated on tyrosine upon CSF1R activation. Isoform 6 is phosphorylated on Ser-340. In terms of tissue distribution, isoform 1; Expressed ubiquitously. Isoform 2: Specifically expressed in most hematopoietic cells. Isoform 3: Predominantly expressed in alveolar macrophages.

The protein localises to the golgi apparatus. It is found in the trans-Golgi network. It localises to the golgi outpost. Its subcellular location is the cytoplasm. The protein resides in the cytoskeleton. The protein localises to the microtubule organizing center. It is found in the endoplasmic reticulum-Golgi intermediate compartment. May link Golgi membranes to the cytoskeleton and participate in the tensile force required for vesicle budding from the Golgi. Thereby, may play a role in Golgi membrane trafficking and could indirectly give its flattened shape to the Golgi apparatus. Alternatively, in concert with LURAP1 and CDC42BPA/CDC42BPB, has been involved in modulating lamellar actomyosin retrograde flow that is crucial to cell protrusion and migration. May be involved in the maintenance of the stromal cell architectures required for cell to cell contact. Regulates trafficking, expression, and activation of innate immune receptors on macrophages. Plays a role to suppress inflammatory responsiveness of macrophages via a mechanism that modulates CD14 trafficking. Acts as a receptor of surfactant-associated protein A (SFTPA1/SP-A) and plays an important role in internalization and clearance of SFTPA1-opsonized S.aureus by alveolar macrophages. Strongly enhances natural killer cell cytotoxicity. This Mus musculus (Mouse) protein is Unconventional myosin-XVIIIa (Myo18a).